The chain runs to 108 residues: Nucleoid-associated protein PSPTO_3645 (108 aa).

Residues 85–96 show a composition bias toward polar residues; that stretch reads QASQDKTASMTA. A disordered region spans residues 85–108; it reads QASQDKTASMTAGMQLPPGMKLPF.

The protein belongs to the YbaB/EbfC family. In terms of assembly, homodimer.

It is found in the cytoplasm. The protein localises to the nucleoid. Binds to DNA and alters its conformation. May be involved in regulation of gene expression, nucleoid organization and DNA protection. This is Nucleoid-associated protein PSPTO_3645 from Pseudomonas syringae pv. tomato (strain ATCC BAA-871 / DC3000).